We begin with the raw amino-acid sequence, 156 residues long: Sec-independent protein translocase protein TatB (156 aa).

A helical transmembrane segment spans residues 2 to 22; it reads FSSVGWGEIFLLVVVGLVVIG. The tract at residues 100-156 is disordered; sequence KIMAEGTEGEAQRNKQAADNNANVVERPADGSTARPTQNDPKDGPNYSGGVSWTDII. Over residues 113–122 the composition is skewed to polar residues; it reads NKQAADNNAN.

This sequence belongs to the TatB family. In terms of assembly, the Tat system comprises two distinct complexes: a TatABC complex, containing multiple copies of TatA, TatB and TatC subunits, and a separate TatA complex, containing only TatA subunits. Substrates initially bind to the TatABC complex, which probably triggers association of the separate TatA complex to form the active translocon.

It is found in the cell membrane. In terms of biological role, part of the twin-arginine translocation (Tat) system that transports large folded proteins containing a characteristic twin-arginine motif in their signal peptide across membranes. Together with TatC, TatB is part of a receptor directly interacting with Tat signal peptides. TatB may form an oligomeric binding site that transiently accommodates folded Tat precursor proteins before their translocation. This is Sec-independent protein translocase protein TatB from Corynebacterium glutamicum (strain ATCC 13032 / DSM 20300 / JCM 1318 / BCRC 11384 / CCUG 27702 / LMG 3730 / NBRC 12168 / NCIMB 10025 / NRRL B-2784 / 534).